Consider the following 264-residue polypeptide: Teichoic acids export ATP-binding protein TagH (264 aa).

Residues 5–243 enclose the ABC transporter domain; that stretch reads VNIKNVTKEY…YEAFLNDFKK (239 aa). ATP is bound at residue 57–64; sequence GINGSGKS.

Belongs to the ABC transporter superfamily. Teichoic acids exporter (TC 3.A.1.104.1) family. In terms of assembly, the complex is composed of two ATP-binding proteins (TagH) and two transmembrane proteins (TagG).

Its subcellular location is the cell membrane. It carries out the reaction ATP + H2O + teichoic acidSide 1 = ADP + phosphate + teichoic acidSide 2.. Its function is as follows. Part of the ABC transporter complex TagGH involved in teichoic acids export. Responsible for energy coupling to the transport system. This chain is Teichoic acids export ATP-binding protein TagH, found in Staphylococcus aureus (strain USA300).